We begin with the raw amino-acid sequence, 375 residues long: Peritrophin-48 (375 aa).

An N-terminal signal peptide occupies residues 1–20 (MIIKTLLASVAIMLIATVNA). Chitin-binding type-2 domains are found at residues 25–83 (AKYC…NCIL), 86–143 (DNPC…SDDD), 153–210 (LNIC…MCER), 224–292 (ETLC…GCNR), and 294–360 (EYTT…ACQN). An intrachain disulfide couples cysteine 60 to cysteine 73. Asparagine 117 carries an N-linked (GlcNAc...) asparagine glycan. 4 disulfides stabilise this stretch: cysteine 120-cysteine 133, cysteine 187-cysteine 200, cysteine 265-cysteine 278, and cysteine 330-cysteine 343. Asparagine 360 is a glycosylation site (N-linked (GlcNAc...) asparagine).

Glycosylated. In terms of tissue distribution, cardia and midgut peritrophic membrane.

May bind chitin or related oligosaccharide structures. This is Peritrophin-48 from Lucilia cuprina (Green bottle fly).